Consider the following 412-residue polypeptide: UV DNA damage endonuclease (412 aa).

This sequence belongs to the uve1/UvsE family.

Component in a DNA repair pathway. Removal of UV LIGHT damaged nucleotides. Recognizes pyrimidine dimers and cleave a phosphodiester bond immediately 5' to the lesion. The sequence is that of UV DNA damage endonuclease from Clostridium perfringens (strain 13 / Type A).